Consider the following 234-residue polypeptide: Leucyl/phenylalanyl-tRNA--protein transferase (234 aa).

It belongs to the L/F-transferase family.

It localises to the cytoplasm. It carries out the reaction N-terminal L-lysyl-[protein] + L-leucyl-tRNA(Leu) = N-terminal L-leucyl-L-lysyl-[protein] + tRNA(Leu) + H(+). It catalyses the reaction N-terminal L-arginyl-[protein] + L-leucyl-tRNA(Leu) = N-terminal L-leucyl-L-arginyl-[protein] + tRNA(Leu) + H(+). The catalysed reaction is L-phenylalanyl-tRNA(Phe) + an N-terminal L-alpha-aminoacyl-[protein] = an N-terminal L-phenylalanyl-L-alpha-aminoacyl-[protein] + tRNA(Phe). Functionally, functions in the N-end rule pathway of protein degradation where it conjugates Leu, Phe and, less efficiently, Met from aminoacyl-tRNAs to the N-termini of proteins containing an N-terminal arginine or lysine. This is Leucyl/phenylalanyl-tRNA--protein transferase from Salmonella paratyphi A (strain ATCC 9150 / SARB42).